An 833-amino-acid polypeptide reads, in one-letter code: Ventricular zone-expressed PH domain-containing protein homolog 1 (833 aa).

The segment at 201-319 (TELLALMSQL…TYLVSQLANM (119 aa)) is interaction with TGFBR1. A disordered region spans residues 458–505 (KGVGSDDGEDENRGDIPASISLSEIDPLGQGNDKLPFKTDTERSQLGE). Residues 492–502 (LPFKTDTERSQ) show a composition bias toward basic and acidic residues. The tract at residues 663 to 833 (ESTFPQQKDL…RESREVTTYL (171 aa)) is interaction with TGFBR1. In terms of domain architecture, PH spans 716–819 (QPLIEGKLKE…WLQCINVAVA (104 aa)).

It belongs to the MELT/VEPH family. As to quaternary structure, interacts with TGFBR1.

The protein localises to the cell membrane. Functionally, interacts with TGF-beta receptor type-1 (TGFBR1) and inhibits dissociation of activated SMAD2 from TGFBR1, impeding its nuclear accumulation and resulting in impaired TGF-beta signaling. May also affect FOXO, Hippo and Wnt signaling. The chain is Ventricular zone-expressed PH domain-containing protein homolog 1 (VEPH1) from Homo sapiens (Human).